The chain runs to 770 residues: Amyloid-beta precursor protein (770 aa).

Residues 1 to 17 (MLPGLALVLLAAWTARA) form the signal peptide. Topologically, residues 18 to 701 (LEVPTDGNAG…AEDVGSNKGA (684 aa)) are extracellular. Positions 28-123 (LLAEPQVAMF…PYRCLVGEFV (96 aa)) are GFLD subdomain. The E1 domain maps to 28-189 (LLAEPQVAMF…RGVEFVCCPL (162 aa)). 6 cysteine pairs are disulfide-bonded: cysteine 38–cysteine 62, cysteine 73–cysteine 117, cysteine 98–cysteine 105, cysteine 133–cysteine 187, cysteine 144–cysteine 174, and cysteine 158–cysteine 186. 96 to 110 (NWCKRSRKQCKTHTH) provides a ligand contact to heparin. A cuBD subdomain region spans residues 131-189 (DKCKFLHQERMDVCETHLHWHTVAKETCSEKSTNLHDYGMLLPCGIDKFRGVEFVCCPL). The copper-binding stretch occupies residues 135–155 (FLHQERMDVCETHLHWHTVAK). Cu(2+)-binding residues include histidine 147, histidine 151, and tyrosine 168. The zinc-binding stretch occupies residues 181-188 (GVEFVCCP). Zn(2+) contacts are provided by glutamate 183, cysteine 186, and cysteine 187. Over residues 196 to 207 (IDSADAEEDDSD) the composition is skewed to acidic residues. Residues 196 to 284 (IDSADAEEDD…TTTTTTESVE (89 aa)) are disordered. Position 198 is a phosphoserine; by CK2 (serine 198). Position 206 is a phosphoserine; by CK1 (serine 206). Sulfotyrosine occurs at positions 217 and 262. Positions 228-264 (VAEEEEVADVEEEEAEDDEDDEDGDEVEEEAEEPYEE) are enriched in acidic residues. The span at 268–281 (RTTSIATTTTTTTE) shows a compositional bias: low complexity. Intrachain disulfides connect cysteine 291–cysteine 341, cysteine 300–cysteine 324, and cysteine 316–cysteine 337. In terms of domain architecture, BPTI/Kunitz inhibitor spans 291-341 (CSEQAETGPCRAMISRWYFDVTEGKCAPFFYGGCGGNRNNFDTEEYCMAVC). Tyrosine 336 carries the post-translational modification Sulfotyrosine. The OX-2 motif lies at 344-365 (VMSQSLLKTTQEHLPQDPVKLP). The 192-residue stretch at 374-565 (AVDKYLETPG…EEIQDEVDEL (192 aa)) folds into the E2 domain. The tract at residues 391 to 423 (FQKAKERLEAKHRERMSQVMREWEEAERQAKNL) is heparin-binding. Serine 441 bears the Phosphoserine mark. The tract at residues 491-522 (FNMLKKYVRAEQKDRQHTLKHFEHVRMVDPKK) is heparin-binding. At tyrosine 497 the chain carries Phosphotyrosine. A collagen-binding region spans residues 523-540 (AAQIRSQVMTHLRVIYER). N-linked (GlcNAc...) asparagine glycosylation is found at asparagine 542 and asparagine 571. Histidine 677, tyrosine 681, histidine 684, and histidine 685 together coordinate Cu(2+). 4 residues coordinate Zn(2+): histidine 677, tyrosine 681, histidine 684, and histidine 685. The tract at residues 695 to 722 (VGSNKGAIIGLMVGGVVIATVIVITLVM) is interaction with PSEN1. Residues 702-722 (IIGLMVGGVVIATVIVITLVM) form a helical membrane-spanning segment. At 723–770 (LKKKQYTSIHHGVVEVDAAVTPEERHLSKMQQNGYENPTYKFFEQMQN) the chain is on the cytoplasmic side. Residues 724–734 (KKKQYTSIHHG) carry the Basolateral sorting signal motif. Threonine 729 bears the Phosphothreonine mark. Serine 730 is subject to Phosphoserine; by APP-kinase I. Positions 732–751 (HHGVVEVDAAVTPEERHLSK) are interaction with G(o)-alpha. Threonine 743 bears the Phosphothreonine; by CDK5 and MAPK10 mark. The segment at 756–770 (GYENPTYKFFEQMQN) is required for the interaction with KIF5B and for anterograde transport in axons. The residue at position 757 (tyrosine 757) is a Phosphotyrosine; by ABL1. The YENPXY motif; contains endocytosis signal motif lies at 757–762 (YENPTY). Residue lysine 763 forms a Glycyl lysine isopeptide (Lys-Gly) (interchain with G-Cter in ubiquitin) linkage.

The protein belongs to the APP family. As to quaternary structure, binds, via its C-terminus, to the PID domain of several cytoplasmic proteins, including APBB family members, the APBA family, MAPK8IP1, SHC1 and NUMB and DAB1. Binding to DAB1 inhibits its serine phosphorylation. Interacts (via NPXY motif) with DAB2 (via PID domain); the interaction is impaired by tyrosine phosphorylation of the NPXY motif. Also interacts with GPCR-like protein BPP, APPBP1, IB1, KNS2 (via its TPR domains), APPBP2 (via BaSS) and DDB1. In vitro, it binds MAPT via the MT-binding domains. Associates with microtubules in the presence of ATP and in a kinesin-dependent manner. Interacts, through a C-terminal domain, with GNAO1. Amyloid-beta protein 42 binds CHRNA7 in hippocampal neurons. Amyloid-beta associates with HADH2. Interacts with CPEB1, ANKS1B and AGER. Interacts with ITM2B. Interacts with ITM2C. Interacts with IDE. Can form homodimers; dimerization is enhanced in the presence of Cu(2+) ions. Can form homodimers; this is promoted by heparin binding. Amyloid-beta protein 40 interacts with S100A9. CTF-alpha product of APP interacts with GSAP. Interacts with SORL1 (via N-terminal ectodomain); this interaction retains APP in the trans-Golgi network and reduces processing into soluble APP-alpha and amyloid-beta peptides. The C99 fragment also interacts with SORL1. Interacts with PLD3. Interacts with VDAC1. Interacts with NSG1; could regulate APP processing. Amyloid-beta protein 42 interacts with FPR2. Interacts (via transmembrane region) with PSEN1; the interaction is direct. Interacts with LRRK2. Interacts (via cytoplasmic domain) with KIF5B. Interacts (via C-terminus) with APBB2/FE65L1 (via C-terminus). Interacts (via intracellular domain) with APBB3. Post-translationally, proteolytically processed under normal cellular conditions. Cleavage either by alpha-secretase, beta-secretase or theta-secretase leads to generation and extracellular release of soluble APP peptides, S-APP-alpha and S-APP-beta, and the retention of corresponding membrane-anchored C-terminal fragments, C80, C83 and C99. Subsequent processing of C80 and C83 by gamma-secretase yields P3 peptides. This is the major secretory pathway and is non-amyloidogenic. Alternatively, presenilin/nicastrin-mediated gamma-secretase processing of C99 releases the amyloid-beta proteins, amyloid-beta protein 40 and amyloid-beta protein 42, major components of amyloid plaques, and the cytotoxic C-terminal fragments, gamma-CTF(50), gamma-CTF(57) and gamma-CTF(59). PSEN1 cleavage is more efficient with C83 than with C99 as substrate (in vitro). Amyloid-beta protein 40 and Amyloid-beta protein 42 are cleaved by ACE. Many other minor amyloid-beta peptides, amyloid-beta 1-X peptides, are found in cerebral spinal fluid (CSF) including the amyloid-beta X-15 peptides, produced from the cleavage by alpha-secretase. Proteolytically cleaved by caspases during neuronal apoptosis. Cleavage at Asp-739 by either caspase-3, -8 or -9 results in the production of the neurotoxic C31 peptide and the increased production of amyloid-beta peptides. In terms of processing, N- and O-glycosylated. Post-translationally, phosphorylation in the C-terminal on tyrosine, threonine and serine residues is neuron-specific. Phosphorylation can affect APP processing, neuronal differentiation and interaction with other proteins. Phosphorylated on Thr-743 in neuronal cells by Cdc5 kinase and Mapk10, in dividing cells by Cdc2 kinase in a cell-cycle dependent manner with maximal levels at the G2/M phase and, in vitro, by GSK-3-beta. The Thr-743 phosphorylated form causes a conformational change which reduces binding of Fe65 family members. In dopaminergic (DA) neurons, phosphorylation on Thr-743 by LRKK2 promotes the production and the nuclear translocation of the APP intracellular domain (AICD) which induces DA neuron apoptosis. Phosphorylation on Tyr-757 is required for SHC binding. Phosphorylated in the extracellular domain by casein kinases on both soluble and membrane-bound APP. This phosphorylation is inhibited by heparin. Extracellular binding and reduction of copper, results in a corresponding oxidation of Cys-144 and Cys-158, and the formation of a disulfide bond. In terms of processing, trophic-factor deprivation triggers the cleavage of surface APP by beta-secretase to release sAPP-beta which is further cleaved to release an N-terminal fragment of APP (N-APP). Post-translationally, amyloid-beta peptides are degraded by IDE. Sulfated on tyrosine residues.

It localises to the cell membrane. Its subcellular location is the membrane. It is found in the perikaryon. The protein localises to the cell projection. The protein resides in the growth cone. It localises to the clathrin-coated pit. Its subcellular location is the early endosome. It is found in the cytoplasmic vesicle. The protein localises to the endoplasmic reticulum. The protein resides in the golgi apparatus. It localises to the secreted. Its subcellular location is the cell surface. It is found in the nucleus. The protein localises to the cytoplasm. Its function is as follows. Functions as a cell surface receptor and performs physiological functions on the surface of neurons relevant to neurite growth, neuronal adhesion and axonogenesis. Interaction between APP molecules on neighboring cells promotes synaptogenesis. Involved in cell mobility and transcription regulation through protein-protein interactions. Can promote transcription activation through binding to APBB1-KAT5 and inhibit Notch signaling through interaction with Numb. Couples to apoptosis-inducing pathways such as those mediated by G(o) and JIP. Inhibits G(o)-alpha ATPase activity. Acts as a kinesin I membrane receptor, mediating the axonal transport of beta-secretase and presenilin 1. By acting as a kinesin I membrane receptor, plays a role in axonal anterograde transport of cargo towards synapses in axons. May be involved in copper homeostasis/oxidative stress through copper ion reduction. In vitro, copper-metallated APP induces neuronal death directly or is potentiated through Cu(2+)-mediated low-density lipoprotein oxidation. Can regulate neurite outgrowth through binding to components of the extracellular matrix such as heparin and collagen I and IV. Induces a AGER-dependent pathway that involves activation of p38 MAPK, resulting in internalization of amyloid-beta peptide and mitochondrial dysfunction in cultured cortical neurons. Provides Cu(2+) ions for GPC1 which are required for release of nitric oxide (NO) and subsequent degradation of the heparan sulfate chains on GPC1. Functionally, amyloid-beta peptides are lipophilic metal chelators with metal-reducing activity. Binds transient metals such as copper, zinc and iron. The gamma-CTF peptides as well as the caspase-cleaved peptides, including C31, are potent enhancers of neuronal apoptosis. This chain is Amyloid-beta precursor protein, found in Sus scrofa (Pig).